The primary structure comprises 156 residues: Phosphopantetheine adenylyltransferase (156 aa).

This sequence belongs to the eukaryotic CoaD family.

The protein localises to the cytoplasm. The enzyme catalyses (R)-4'-phosphopantetheine + ATP + H(+) = 3'-dephospho-CoA + diphosphate. It functions in the pathway cofactor biosynthesis; coenzyme A biosynthesis. Its function is as follows. Reversibly transfers an adenylyl group from ATP to 4'-phosphopantetheine, yielding dephospho-CoA (dPCoA) and pyrophosphate. This is Phosphopantetheine adenylyltransferase from Methanosarcina acetivorans (strain ATCC 35395 / DSM 2834 / JCM 12185 / C2A).